Reading from the N-terminus, the 228-residue chain is Early nodulin-like protein 18 (228 aa).

Positions 1-26 (MSPSCSSCVNVLLIMCLMLLSLSADA) are cleaved as a signal peptide. A Phytocyanin domain is found at 28–148 (KNYTVGESTG…GQHFMINVTH (121 aa)). N-linked (GlcNAc...) asparagine glycosylation is found at Asn29, Asn71, Asn94, and Asn145. A disulfide bridge connects residues Cys86 and Cys136. Residues 148–211 (HGQGLPDSSS…VHSKKSSSST (64 aa)) are disordered. Residues 153–170 (PDSSSPDDAAAPGPSESS) show a composition bias toward low complexity. Over residues 188–204 (DHPKDIESADDDKEVHS) the composition is skewed to basic and acidic residues. Ser204 carries GPI-anchor amidated serine lipidation. Residues 205–228 (KKSSSSTTKTSLFCFVFMGLFASF) constitute a propeptide, removed in mature form.

Belongs to the early nodulin-like (ENODL) family. Mostly expressed in seedlings, roots and flowers, and, to a lower extent, in leaves, stems and seeds.

It localises to the cell membrane. May act as a carbohydrate transporter. In Arabidopsis thaliana (Mouse-ear cress), this protein is Early nodulin-like protein 18.